Consider the following 375-residue polypeptide: Acetylornithine aminotransferase (375 aa).

Residues 102 to 103 (GA) and Phe-129 each bind pyridoxal 5'-phosphate. A N(2)-acetyl-L-ornithine-binding site is contributed by Arg-132. 214 to 217 (DEVQ) provides a ligand contact to pyridoxal 5'-phosphate. Position 243 is an N6-(pyridoxal phosphate)lysine (Lys-243). N(2)-acetyl-L-ornithine is bound at residue Ser-271. Thr-272 contacts pyridoxal 5'-phosphate.

The protein belongs to the class-III pyridoxal-phosphate-dependent aminotransferase family. ArgD subfamily. Homodimer. It depends on pyridoxal 5'-phosphate as a cofactor.

It is found in the cytoplasm. It catalyses the reaction N(2)-acetyl-L-ornithine + 2-oxoglutarate = N-acetyl-L-glutamate 5-semialdehyde + L-glutamate. It participates in amino-acid biosynthesis; L-arginine biosynthesis; N(2)-acetyl-L-ornithine from L-glutamate: step 4/4. This chain is Acetylornithine aminotransferase, found in Archaeoglobus fulgidus (strain ATCC 49558 / DSM 4304 / JCM 9628 / NBRC 100126 / VC-16).